A 393-amino-acid chain; its full sequence is uncharacterized protein (393 aa).

[4Fe-4S] cluster contacts are provided by Cys-9, Cys-15, Cys-18, and Cys-97. S-adenosyl-L-methionine contacts are provided by Gln-231, Tyr-258, Glu-279, and Asp-325. The Nucleophile role is filled by Cys-352.

Belongs to the class I-like SAM-binding methyltransferase superfamily. RNA M5U methyltransferase family.

This is an uncharacterized protein from Leptospira interrogans serogroup Icterohaemorrhagiae serovar Lai (strain 56601).